Consider the following 321-residue polypeptide: Ribose-phosphate pyrophosphokinase (321 aa).

Residues 44 to 46 (DGE) and 103 to 104 (RQ) contribute to the ATP site. Residues histidine 137 and aspartate 179 each contribute to the Mg(2+) site. Residue lysine 202 is part of the active site. D-ribose 5-phosphate contacts are provided by residues arginine 204, aspartate 228, and 232-236 (DTAGT).

Belongs to the ribose-phosphate pyrophosphokinase family. Class I subfamily. Homohexamer. It depends on Mg(2+) as a cofactor.

It localises to the cytoplasm. It carries out the reaction D-ribose 5-phosphate + ATP = 5-phospho-alpha-D-ribose 1-diphosphate + AMP + H(+). It functions in the pathway metabolic intermediate biosynthesis; 5-phospho-alpha-D-ribose 1-diphosphate biosynthesis; 5-phospho-alpha-D-ribose 1-diphosphate from D-ribose 5-phosphate (route I): step 1/1. Involved in the biosynthesis of the central metabolite phospho-alpha-D-ribosyl-1-pyrophosphate (PRPP) via the transfer of pyrophosphoryl group from ATP to 1-hydroxyl of ribose-5-phosphate (Rib-5-P). The protein is Ribose-phosphate pyrophosphokinase of Staphylococcus haemolyticus (strain JCSC1435).